The following is a 381-amino-acid chain: MRMHNKIQLLSVLNTHLVAYPTPMNLNYSWNGGSLAGMMLASQMLTGILLAMHYVGHVDYAFASVQHLMTDVPSGMILRYAHANGASLFFIVVYLHVLRGMYYGSGAQPREIVWISGVVILLVMIITAFIGYVLPWGQMSFWGATVITSLATAIPVVGKHIMYWLWGGFSVDNPTLNRFYSFHYTLPFILAGLSVFHIAALHQYGSTNPLGVNSQSSLISFGSYFGAKDLVGALFLALVFSILVFFYPDLLGHPDNLIPANPYSTPQHIVPEWYFLWVYAILRSIPNKAMGVLAIGLVFASLFAMPFIGLGGGKFRIITEWLYWTFLADVLLLTWLGGNEITPITSFVGQCCTAYLFFYLLVCQPLVGYLETQFAHGTQTN.

The next 4 helical transmembrane spans lie at 32 to 52, 76 to 98, 113 to 133, and 179 to 199; these read GGSL…LLAM, MILR…LHVL, VWIS…IGYV, and FYSF…FHIA. Residues histidine 82 and histidine 96 each coordinate heme b. Residues histidine 183 and histidine 197 each contribute to the heme b site. Histidine 202 provides a ligand contact to a ubiquinone. 4 helical membrane-spanning segments follow: residues 225-245, 289-309, 318-338, and 345-365; these read FGAK…ILVF, AMGV…PFIG, ITEW…WLGG, and TSFV…VCQP.

This sequence belongs to the cytochrome b family. The main subunits of complex b-c1 are: cytochrome b, cytochrome c1 and the Rieske protein. It depends on heme b as a cofactor.

Its subcellular location is the mitochondrion inner membrane. Its function is as follows. Component of the ubiquinol-cytochrome c reductase complex (complex III or cytochrome b-c1 complex) that is part of the mitochondrial respiratory chain. The b-c1 complex mediates electron transfer from ubiquinol to cytochrome c. Contributes to the generation of a proton gradient across the mitochondrial membrane that is then used for ATP synthesis. In Chlamydomonas reinhardtii (Chlamydomonas smithii), this protein is Cytochrome b (MT-CYB).